Here is a 314-residue protein sequence, read N- to C-terminus: Serine hydrolase-like protein 2 (314 aa).

The 261-residue stretch at Pro33–Pro293 folds into the AB hydrolase-1 domain. Residue Ser108 is part of the active site.

Belongs to the AB hydrolase superfamily.

Its subcellular location is the cytoplasm. It is found in the perinuclear region. It localises to the peroxisome. In terms of biological role, probable serine hydrolase. May be related to cell muscle hypertrophy. The protein is Serine hydrolase-like protein 2 (SERHL2) of Homo sapiens (Human).